The primary structure comprises 455 residues: Pentatricopeptide repeat-containing protein At3g26630, chloroplastic (455 aa).

Residues 1 to 19 constitute a chloroplast transit peptide; that stretch reads MAAPSPSSPPNLLSPPPFR. 11 PPR repeats span residues 51-81, 82-117, 118-152, 153-187, 188-214, 215-249, 250-284, 285-315, 316-350, 352-387, and 388-418; these read DQLLVRQLISVSSSFGETQYASLVFNQLQSP, STFTWNLMIRSLSVNHKPREALLLFILMMISHQSQF, DKFTFPFVIKACLASSSIRLGTQVHGLAIKAGFFN, DVFFQNTLMDLYFKCGKPDSGRKVFDKMPGRSIVS, WTTMLYGLVSNSQLDSAEIVFNQMPMR, NVVSWTAMITAYVKNRRPDEAFQLFRRMQVDDVKP, NEFTIVNLLQASTQLGSLSMGRWVHDYAHKNGFVL, DCFLGTALIDMYSKCGSLQDARKVFDVMQGK, SLATWNSMITSLGVHGCGEEALSLFEEMEEEASVE, DAITFVGVLSACANTGNVKDGLRYFTRMIQVYGISP, and IREHNACMIQLLEQALEVEKASNLVESMDSD.

This sequence belongs to the PPR family. PCMP-A subfamily.

It is found in the plastid. The protein resides in the chloroplast. In Arabidopsis thaliana (Mouse-ear cress), this protein is Pentatricopeptide repeat-containing protein At3g26630, chloroplastic (PCMP-A6).